We begin with the raw amino-acid sequence, 143 residues long: Type II secretion system core protein G (143 aa).

The propeptide at 1 to 17 is leader sequence; the sequence is MIKRSITRSPSRAGQAG. M18 is subject to N-methylmethionine. Residues 18-38 traverse the membrane as a helical segment; it reads MSLLEIIIVIVLIGAVLTLVG.

Belongs to the GSP G family. Type II secretion system is composed of four main components: the outer membrane complex, the inner membrane complex, the cytoplasmic secretion ATPase and the periplasm-spanning pseudopilus. Forms homomultimers. Interacts with pseudopilin tip complex component XpsJ as well as XpsI and XcpH. Interacts with XpsN and secretin XpsD. Post-translationally, cleaved by the prepilin peptidase. In terms of processing, methylated by prepilin peptidase at the amino group of the N-terminal methionine once the leader sequence is cleaved.

The protein localises to the cell inner membrane. In terms of biological role, core component of the type II secretion system required for the energy-dependent secretion of extracellular factors such as proteases and toxins from the periplasm. Pseudopilin (pilin-like) protein that polymerizes to form the pseudopilus. Further polymerization triggers pseudopilus growth. In Xanthomonas campestris pv. campestris (strain ATCC 33913 / DSM 3586 / NCPPB 528 / LMG 568 / P 25), this protein is Type II secretion system core protein G (xpsG).